A 219-amino-acid polypeptide reads, in one-letter code: Probable GTP-binding protein EngB (219 aa).

Residues 24-207 (VQPEVAFAGR…HALIESWVRP (184 aa)) enclose the EngB-type G domain. Residues 32 to 39 (GRSNAGKS), 59 to 63 (GRTQH), 81 to 84 (DLPG), 148 to 151 (TKCD), and 185 to 188 (LFSA) each bind GTP. Ser-39 and Thr-61 together coordinate Mg(2+).

Belongs to the TRAFAC class TrmE-Era-EngA-EngB-Septin-like GTPase superfamily. EngB GTPase family. The cofactor is Mg(2+).

Its function is as follows. Necessary for normal cell division and for the maintenance of normal septation. The sequence is that of Probable GTP-binding protein EngB from Burkholderia mallei (strain ATCC 23344).